The following is a 115-amino-acid chain: NADH-ubiquinone oxidoreductase chain 3 (115 aa).

The next 3 membrane-spanning stretches (helical) occupy residues 3 to 23 (LILMMILISSLISTILAIVAF), 56 to 76 (FFLVAILFLLFDLEIALLLPL), and 84 to 104 (PTLMLMWAFTIIILLTIGLIY).

The protein belongs to the complex I subunit 3 family.

It localises to the mitochondrion membrane. The enzyme catalyses a ubiquinone + NADH + 5 H(+)(in) = a ubiquinol + NAD(+) + 4 H(+)(out). In terms of biological role, core subunit of the mitochondrial membrane respiratory chain NADH dehydrogenase (Complex I) that is believed to belong to the minimal assembly required for catalysis. Complex I functions in the transfer of electrons from NADH to the respiratory chain. The immediate electron acceptor for the enzyme is believed to be ubiquinone. This is NADH-ubiquinone oxidoreductase chain 3 (MT-ND3) from Polypterus ornatipinnis (Ornate bichir).